Reading from the N-terminus, the 375-residue chain is Solute carrier family 35 member F2 (375 aa).

M1 carries the post-translational modification N-acetylmethionine. Phosphoserine is present on residues S5, S22, S25, and S28. Helical transmembrane passes span I39–T59, M73–F93, W108–V126, S136–L156, F165–A185, V195–C215, E227–V247, L263–I283, S290–F310, and F314–S334. A Phosphoserine modification is found at S372.

Belongs to the SLC35F solute transporter family.

It is found in the membrane. Functionally, putative solute transporter. This Mus musculus (Mouse) protein is Solute carrier family 35 member F2 (Slc35f2).